A 380-amino-acid chain; its full sequence is PqqA peptide cyclase (380 aa).

The region spanning 8 to 223 (VNPPLWLLAE…VADYRQKMAA (216 aa)) is the Radical SAM core domain. Residues Cys22, Cys26, and Cys29 each contribute to the [4Fe-4S] cluster site.

This sequence belongs to the radical SAM superfamily. PqqE family. As to quaternary structure, interacts with PqqD. The interaction is necessary for activity of PqqE. The cofactor is [4Fe-4S] cluster.

The enzyme catalyses [PQQ precursor protein] + S-adenosyl-L-methionine = E-Y cross-linked-[PQQ precursor protein] + 5'-deoxyadenosine + L-methionine + H(+). The protein operates within cofactor biosynthesis; pyrroloquinoline quinone biosynthesis. In terms of biological role, catalyzes the cross-linking of a glutamate residue and a tyrosine residue in the PqqA protein as part of the biosynthesis of pyrroloquinoline quinone (PQQ). This Klebsiella pneumoniae (strain 342) protein is PqqA peptide cyclase.